The sequence spans 591 residues: Speriolin (591 aa).

Residues 1 to 42 (MSLLTNYEGLRHQIERLVRENEELKKLVRLIRENHELKSAIK) are a coiled coil. Positions 1-78 (MSLLTNYEGL…NNGVFLPPSP (78 aa)) are necessary for targeting centrosomes. The segment covering 302–314 (NTSDTQAQPSAAQ) has biased composition (polar residues). Disordered regions lie at residues 302–331 (NTSD…TSPT) and 346–435 (ATSY…ENPR). A compositionally biased stretch (low complexity) spans 317–331 (VVPASVPTSPTTSPT). Polar residues-rich tracts occupy residues 346-357 (ATSYTPSSTTHI) and 390-401 (PRTSSSPASVND).

The protein belongs to the speriolin family. Found in a complex with CDC20, CDC27 and TUBG1. Interacts with CDC20. Detected only in testis.

The protein resides in the cytoplasm. The protein localises to the cytoskeleton. It is found in the microtubule organizing center. Its subcellular location is the centrosome. The protein is Speriolin (SPATC1) of Homo sapiens (Human).